Consider the following 286-residue polypeptide: Transcription factor egl-46 (286 aa).

The segment at 180-200 adopts a C2H2-type 1; atypical zinc-finger fold; that stretch reads CICRLCKVKYEDVFKLAQHKC. C2H2-type zinc fingers lie at residues 208 to 230 and 248 to 271; these read YKCP…RRWH and VSCS…STCQ.

The protein belongs to the INSM1 family. In terms of assembly, interacts (via C-terminus) with egl-44 (via N-terminus); the interaction is direct; the interaction may regulate transcription. Expressed in touch cells, HSN cells, ventral cord motor neurons and ciliated ray neurons.

It localises to the nucleus. Functionally, transcription factor. Represses expression of genes involved in differentiation of touch receptor neurons (TRN), probably acting as a heterodimer with egl-44, perhaps by occupying similar cis-regulatory elements as an unc-86/mec-3 heterodimer. Plays a role in cell fate specification of neurons, including the hook neuron HOB, the gas-sensing neuron BAG and touch receptor neurons. Plays a role in neuron differentiation by repressing the expression of zag-1 in FLP neurons, probably acting as a heterodimer with egl-44; because zag-1 represses expression of egl-46 and egl-44, together these proteins form a bistable, negative-feedback loop that regulates the choice between neuronal fates. Acts downstream of egl-44 to prevent touch cell differentiation in FLP neurons. Involved in male mating behavior, acting in concert with egl-44, via modulation of expression of polycystins lov-1 and pkd-2, homeodomain protein ceh-26, and neuropeptide-like protein nlp-8. Modulates the expression of a subset of terminal differentiation genes involved in O(2)- and CO(2)-sensing, acting in parallel to ets-5 and egl-13. May act upstream of RFX transcription factor daf-19 to regulate gene expression specifically in the HOB neuron. Plays a role in specifying commissural dendrites of the PVD nociceptive neurons, acting in concert with egl-44. In association with egl-44, regulates cell cycle exit in the neuronal Q cell lineage. This Caenorhabditis elegans protein is Transcription factor egl-46.